The following is a 545-amino-acid chain: Mitogen-activated protein kinase kinase kinase mom-4 (545 aa).

Over residues 1–21 (MDTSPHSKPSSSSASQSSHSP) the composition is skewed to low complexity. The interval 1 to 35 (MDTSPHSKPSSSSASQSSHSPSPAPVTAPRKTRDS) is disordered. A Protein kinase domain is found at 53–308 (NLNSHQLGRG…AECLQYFTAL (256 aa)). ATP-binding positions include 59–67 (LGRGTYGIV) and K86. D178 acts as the Proton acceptor in catalysis. The tract at residues 316-444 (NVPLADANTN…PIDDRRDSNE (129 aa)) is disordered. 2 stretches are compositionally biased toward polar residues: residues 352–369 (NGRT…QAVN) and 396–411 (ASSS…QSEA).

The protein belongs to the protein kinase superfamily. STE Ser/Thr protein kinase family. MAP kinase kinase kinase subfamily. In terms of assembly, interacts with, and is activated by, tap-1. It depends on Mg(2+) as a cofactor.

The enzyme catalyses L-seryl-[protein] + ATP = O-phospho-L-seryl-[protein] + ADP + H(+). The catalysed reaction is L-threonyl-[protein] + ATP = O-phospho-L-threonyl-[protein] + ADP + H(+). In terms of biological role, part of the Wnt signaling pathway essential for the specification of the mesodermal cell fate in early embryos. Stimulates the wrm-1/lit-1-dependent phosphorylation of pop-1 and plays a role in the initial nuclear accumulation of wrm-1. The protein is Mitogen-activated protein kinase kinase kinase mom-4 of Caenorhabditis briggsae.